Reading from the N-terminus, the 175-residue chain is MSRVAKKPVSLPKGVELNVQPELISVKGPKGTLTLQKPVGVEIAIDGDVATLSANDPSQIAITGTVRAILANMIKGVSEGFERKLELVGVGYRAAMQGKDLSLALGFSHPLVFVAPEGITLSTPTQTEILVQGADKQRVGEVAAKIRGFRPPEPYKGKGVKYAGEVIIRKEAKKA.

It belongs to the universal ribosomal protein uL6 family. As to quaternary structure, part of the 50S ribosomal subunit.

This protein binds to the 23S rRNA, and is important in its secondary structure. It is located near the subunit interface in the base of the L7/L12 stalk, and near the tRNA binding site of the peptidyltransferase center. In Xanthomonas campestris pv. campestris (strain 8004), this protein is Large ribosomal subunit protein uL6.